The following is a 178-amino-acid chain: Caveolin-1 (178 aa).

Ser-2 bears the N-acetylserine mark. Ser-2 is modified (phosphoserine). Residues 2–94 form a required for homooligomerization region; that stretch reads SGGKYVDSEG…WKASFTTFTV (93 aa). The Cytoplasmic portion of the chain corresponds to 2-104; the sequence is SGGKYVDSEG…TKYWFYRLLS (103 aa). At Lys-5 the chain carries N6-acetyllysine; alternate. Lys-5 is covalently cross-linked (Glycyl lysine isopeptide (Lys-Gly) (interchain with G-Cter in ubiquitin); alternate). At Tyr-6 the chain carries Phosphotyrosine. Position 9 is a phosphoserine (Ser-9). A Phosphotyrosine; by ABL1 modification is found at Tyr-14. Tyr-25 is modified (phosphotyrosine). Glycyl lysine isopeptide (Lys-Gly) (interchain with G-Cter in ubiquitin) cross-links involve residues Lys-26, Lys-30, Lys-39, Lys-47, and Lys-57. Positions 82-94 are interaction with CAVIN3; that stretch reads DGIWKASFTTFTV. Residues 105 to 125 constitute an intramembrane region (helical); sequence AVFGIPMALIWGIYFAIVSFL. Topologically, residues 126–178 are cytoplasmic; that stretch reads HIWVVVPYIKSFLIEIQCISRVYSIYIHTFCDPLFEAFGKVFSNIRINTQKEI. Positions 131–142 are interacts with SPRY1, SPRY2, SPRY3 and SPRY4; that stretch reads VPYIKSFLIEIQ. Residues Cys-143 and Cys-156 are each lipidated (S-palmitoyl cysteine). The segment at 149–160 is interacts with SPRY1, SPRY2, and SPRY4; it reads SIYIHTFCDPLF. Residues 167–178 form an interacts with SPRY1, SPRY2, SPRY3 and SPRY4 region; that stretch reads FSNIRINTQKEI.

This sequence belongs to the caveolin family. Homooligomer. Interacts (via the N-terminus) with DPP4; the interaction is direct. Forms a stable heterooligomeric complex with CAV2 that targets to lipid rafts and drives caveolae formation. Interacts with PACSIN2; this interaction induces membrane tubulation. Interacts with BMX, BTK, CTNNB1, CDH1, GLIPR2, JUP, NOSTRIN, SNAP25 and STX1A. Interacts with SLC7A9. Interacts with TGFBR1. Interacts with CAVIN3 (via leucine-zipper domain) in a cholesterol-sensitive manner. Interacts with CAVIN1. Interacts with EHD2 in a cholesterol-dependent manner. Forms a ternary complex with UBXN6 and VCP; mediates CAV1 targeting to lysosomes for degradation. Interacts with ABCG1; this interaction regulates ABCG1-mediated cholesterol efflux. Interacts with NEU3; this interaction enhances NEU3 sialidase activity within caveola. Interacts (via C-terminus) with SPRY1, SPRY2 (via C-terminus), SPRY3, and SPRY4. In terms of processing, phosphorylated at Tyr-14 by ABL1 in response to oxidative stress. Ubiquitinated. Undergo monoubiquitination and multi- and/or polyubiquitination. Monoubiquitination of N-terminal lysines promotes integration in a ternary complex with UBXN6 and VCP which promotes oligomeric CAV1 targeting to lysosomes for degradation. Ubiquitinated by ZNRF1; leading to degradation and modulation of the TLR4-mediated immune response.

Its subcellular location is the golgi apparatus membrane. It localises to the cell membrane. It is found in the membrane. The protein resides in the caveola. The protein localises to the membrane raft. Its function is as follows. May act as a scaffolding protein within caveolar membranes. Forms a stable heterooligomeric complex with CAV2 that targets to lipid rafts and drives caveolae formation. Mediates the recruitment of CAVIN proteins (CAVIN1/2/3/4) to the caveolae. Interacts directly with G-protein alpha subunits and can functionally regulate their activity. Involved in the costimulatory signal essential for T-cell receptor (TCR)-mediated T-cell activation. Its binding to DPP4 induces T-cell proliferation and NF-kappa-B activation in a T-cell receptor/CD3-dependent manner. Recruits CTNNB1 to caveolar membranes and may regulate CTNNB1-mediated signaling through the Wnt pathway. Negatively regulates TGFB1-mediated activation of SMAD2/3 by mediating the internalization of TGFBR1 from membrane rafts leading to its subsequent degradation. Binds 20(S)-hydroxycholesterol (20(S)-OHC). The sequence is that of Caveolin-1 (CAV1) from Rhinolophus ferrumequinum (Greater horseshoe bat).